The following is a 453-amino-acid chain: Transcription factor bHLH110 (453 aa).

Disordered stretches follow at residues 1–37 and 177–197; these read MDSANLHQLQDQLQLVGSSSSSSSLDNNSDPSCYGAS and SSLPSSSSSSSPSSQSHRGNF. Composition is skewed to low complexity over residues 8-32 and 177-192; these read QLQDQLQLVGSSSSSSSLDNNSDPS and SSLPSSSSSSSPSSQS. One can recognise a bHLH domain in the interval 322-371; it reads VESRSSCPPFKVRKEKLGDRIAALQQLVSPFGKTDTASVLMEAIGYIKFL. The tract at residues 386–411 is disordered; the sequence is SRNRPGKASQLVSQSQEGDEEETRDL.

As to quaternary structure, homodimer.

Its subcellular location is the nucleus. In Arabidopsis thaliana (Mouse-ear cress), this protein is Transcription factor bHLH110 (BHLH110).